The following is a 602-amino-acid chain: Elongation factor 4 (602 aa).

Positions 7–189 (SKIRNFCIIA…AIVRRVPPPQ (183 aa)) constitute a tr-type G domain. Residues 19–24 (DHGKST) and 136–139 (NKVD) each bind GTP.

The protein belongs to the TRAFAC class translation factor GTPase superfamily. Classic translation factor GTPase family. LepA subfamily.

The protein localises to the cell inner membrane. It catalyses the reaction GTP + H2O = GDP + phosphate + H(+). Required for accurate and efficient protein synthesis under certain stress conditions. May act as a fidelity factor of the translation reaction, by catalyzing a one-codon backward translocation of tRNAs on improperly translocated ribosomes. Back-translocation proceeds from a post-translocation (POST) complex to a pre-translocation (PRE) complex, thus giving elongation factor G a second chance to translocate the tRNAs correctly. Binds to ribosomes in a GTP-dependent manner. The sequence is that of Elongation factor 4 from Prochlorococcus marinus (strain MIT 9215).